The sequence spans 190 residues: ATP synthase subunit b (190 aa).

Residues 4 to 24 (ILAPVLSLVLIAGVASPALAA) traverse the membrane as a helical segment.

The protein belongs to the ATPase B chain family. F-type ATPases have 2 components, F(1) - the catalytic core - and F(0) - the membrane proton channel. F(1) has five subunits: alpha(3), beta(3), gamma(1), delta(1), epsilon(1). F(0) has three main subunits: a(1), b(2) and c(10-14). The alpha and beta chains form an alternating ring which encloses part of the gamma chain. F(1) is attached to F(0) by a central stalk formed by the gamma and epsilon chains, while a peripheral stalk is formed by the delta and b chains.

The protein localises to the cell inner membrane. In terms of biological role, f(1)F(0) ATP synthase produces ATP from ADP in the presence of a proton or sodium gradient. F-type ATPases consist of two structural domains, F(1) containing the extramembraneous catalytic core and F(0) containing the membrane proton channel, linked together by a central stalk and a peripheral stalk. During catalysis, ATP synthesis in the catalytic domain of F(1) is coupled via a rotary mechanism of the central stalk subunits to proton translocation. Its function is as follows. Component of the F(0) channel, it forms part of the peripheral stalk, linking F(1) to F(0). In Ruegeria pomeroyi (strain ATCC 700808 / DSM 15171 / DSS-3) (Silicibacter pomeroyi), this protein is ATP synthase subunit b.